Reading from the N-terminus, the 198-residue chain is Lipoprotein signal peptidase (198 aa).

Residues 1 to 34 form a disordered region; that stretch reads MDDERVSQDPTAENETDAEDRNDDDPSGSAPPQP. The segment covering 12–26 has biased composition (acidic residues); sequence AENETDAEDRNDDDP. A run of 3 helical transmembrane segments spans residues 42–62, 92–112, and 120–140; these read LLFVIAGVVLATDLLTKILAV, MATGMTWLLTLVAVGVVIGVV, and SPWWALGLGLVLGGALGNLVD. Catalysis depends on residues D155 and D169. Residues 167 to 187 form a helical membrane-spanning segment; sequence VADSGIVCGAILLVVLTLIGL.

It belongs to the peptidase A8 family.

It localises to the cell membrane. It carries out the reaction Release of signal peptides from bacterial membrane prolipoproteins. Hydrolyzes -Xaa-Yaa-Zaa-|-(S,diacylglyceryl)Cys-, in which Xaa is hydrophobic (preferably Leu), and Yaa (Ala or Ser) and Zaa (Gly or Ala) have small, neutral side chains.. It functions in the pathway protein modification; lipoprotein biosynthesis (signal peptide cleavage). This protein specifically catalyzes the removal of signal peptides from prolipoproteins. This is Lipoprotein signal peptidase from Rhodococcus jostii (strain RHA1).